The primary structure comprises 640 residues: Serine/threonine-protein kinase ELM1 (640 aa).

Residues 27–47 (ELDSPPITPTSQTSSFGSSFS) form a disordered region. The span at 35–47 (PTSQTSSFGSSFS) shows a compositional bias: low complexity. Residues 88-420 (YTLGVSAGSG…PIDSRNHSQI (333 aa)) enclose the Protein kinase domain. Residues 94–102 (AGSGQFGYV) and lysine 117 contribute to the ATP site. Serine 152 is modified (phosphoserine). The active-site Proton acceptor is the aspartate 259. 2 positions are modified to phosphoserine: serine 516 and serine 519. The span at 520-529 (LPNLTVNNDK) shows a compositional bias: polar residues. Disordered regions lie at residues 520–547 (LPNL…HSSL) and 562–587 (SPKE…MDRT). Residues 530 to 541 (QNSDMKTDRSES) show a composition bias toward basic and acidic residues. A compositionally biased stretch (polar residues) spans 569 to 579 (RTHINCSQDKP).

The protein belongs to the protein kinase superfamily. Ser/Thr protein kinase family. The cofactor is Mg(2+).

The catalysed reaction is L-seryl-[protein] + ATP = O-phospho-L-seryl-[protein] + ADP + H(+). It catalyses the reaction L-threonyl-[protein] + ATP = O-phospho-L-threonyl-[protein] + ADP + H(+). Functionally, important role in G1 events required for bud emergence and septin organization. Coordinates cell growth and cell division at G2/M, essential for efficient cytokinesis and for regulation of SWE1. The polypeptide is Serine/threonine-protein kinase ELM1 (ELM1) (Saccharomyces cerevisiae (strain ATCC 204508 / S288c) (Baker's yeast)).